Here is a 360-residue protein sequence, read N- to C-terminus: Photosystem II protein D1 (360 aa).

3 helical membrane-spanning segments follow: residues 29 to 46, 118 to 133, and 142 to 156; these read YIGWFGVLMIPTLLTATS, HFLTGVACYIGREWEL, and WISVAFTAPVAAAAA. Histidine 118 is a chlorophyll a binding site. Position 126 (tyrosine 126) interacts with pheophytin a. Aspartate 170 and glutamate 189 together coordinate [CaMn4O5] cluster. Residues 197 to 218 traverse the membrane as a helical segment; that stretch reads FHQLGVAGVFGGSLFSAMHGSL. Residue histidine 198 participates in chlorophyll a binding. Residues histidine 215 and 264–265 each bind a quinone; that span reads SF. Histidine 215 contributes to the Fe cation binding site. Histidine 272 serves as a coordination point for Fe cation. The chain crosses the membrane as a helical span at residues 274–288; sequence FLGLWPVVGIWLTAL. Residues histidine 332, glutamate 333, aspartate 342, and alanine 344 each coordinate [CaMn4O5] cluster. A propeptide spanning residues 345–360 is cleaved from the precursor; the sequence is SGESLPVALTAPAVNG.

Belongs to the reaction center PufL/M/PsbA/D family. As to quaternary structure, PSII is composed of 1 copy each of membrane proteins PsbA, PsbB, PsbC, PsbD, PsbE, PsbF, PsbH, PsbI, PsbJ, PsbK, PsbL, PsbM, PsbT, PsbX, PsbY, PsbZ, Psb30/Ycf12, at least 3 peripheral proteins of the oxygen-evolving complex and a large number of cofactors. It forms dimeric complexes. It depends on The D1/D2 heterodimer binds P680, chlorophylls that are the primary electron donor of PSII, and subsequent electron acceptors. It shares a non-heme iron and each subunit binds pheophytin, quinone, additional chlorophylls, carotenoids and lipids. D1 provides most of the ligands for the Mn4-Ca-O5 cluster of the oxygen-evolving complex (OEC). There is also a Cl(-1) ion associated with D1 and D2, which is required for oxygen evolution. The PSII complex binds additional chlorophylls, carotenoids and specific lipids. as a cofactor. In terms of processing, tyr-161 forms a radical intermediate that is referred to as redox-active TyrZ, YZ or Y-Z. C-terminally processed by CTPA; processing is essential to allow assembly of the oxygen-evolving complex and thus photosynthetic growth.

Its subcellular location is the plastid. The protein localises to the chloroplast thylakoid membrane. The enzyme catalyses 2 a plastoquinone + 4 hnu + 2 H2O = 2 a plastoquinol + O2. Its function is as follows. Photosystem II (PSII) is a light-driven water:plastoquinone oxidoreductase that uses light energy to abstract electrons from H(2)O, generating O(2) and a proton gradient subsequently used for ATP formation. It consists of a core antenna complex that captures photons, and an electron transfer chain that converts photonic excitation into a charge separation. The D1/D2 (PsbA/PsbD) reaction center heterodimer binds P680, the primary electron donor of PSII as well as several subsequent electron acceptors. In Pyropia yezoensis (Susabi-nori), this protein is Photosystem II protein D1.